The following is a 430-amino-acid chain: Aspartate aminotransferase, mitochondrial (430 aa).

The N-terminal 29 residues, 1–29 (MALLHSGRVLSGMAAAFHPGLAAAASARA), are a transit peptide targeting the mitochondrion. Threonine 48 bears the Phosphothreonine mark. An N6-acetyllysine modification is found at lysine 59. Substrate is bound at residue glycine 65. The residue at position 73 (lysine 73) is an N6-acetyllysine; alternate. The residue at position 73 (lysine 73) is an N6-succinyllysine; alternate. The residue at position 82 (lysine 82) is an N6-acetyllysine. The residue at position 90 (lysine 90) is an N6-acetyllysine; alternate. N6-succinyllysine; alternate is present on lysine 90. The residue at position 96 (tyrosine 96) is a 3'-nitrotyrosine; alternate. Position 96 is a phosphotyrosine; alternate (tyrosine 96). 2 positions are modified to N6-acetyllysine; alternate: lysine 107 and lysine 122. N6-succinyllysine; alternate is present on residues lysine 107 and lysine 122. Residue serine 143 is modified to Phosphoserine. At lysine 159 the chain carries N6-acetyllysine; alternate. Residue lysine 159 is modified to N6-succinyllysine; alternate. Tryptophan 162 contacts substrate. At lysine 185 the chain carries N6-acetyllysine; alternate. Lysine 185 carries the N6-succinyllysine; alternate modification. Asparagine 215 provides a ligand contact to substrate. Residue lysine 227 is modified to N6-succinyllysine. Position 234 is an N6-acetyllysine (lysine 234). Residues lysine 279 and lysine 296 each carry the N6-acetyllysine; alternate modification. Position 279 is an N6-(pyridoxal phosphate)lysine; alternate (lysine 279). Lysine 296 is modified (N6-succinyllysine; alternate). Residue lysine 302 is modified to N6-acetyllysine. Lysine 309 carries the post-translational modification N6-acetyllysine; alternate. Residue lysine 309 is modified to N6-succinyllysine; alternate. Asymmetric dimethylarginine is present on arginine 313. Lysine 338 bears the N6-acetyllysine; alternate mark. The residue at position 338 (lysine 338) is an N6-succinyllysine; alternate. Residue lysine 345 is modified to N6-acetyllysine. The residue at position 363 (lysine 363) is an N6-acetyllysine; alternate. Lysine 363 carries the N6-succinyllysine; alternate modification. N6-acetyllysine is present on residues lysine 364 and lysine 387. 2 positions are modified to N6-acetyllysine; alternate: lysine 396 and lysine 404. An N6-succinyllysine; alternate mark is found at lysine 396 and lysine 404. Position 407 (arginine 407) interacts with substrate.

Belongs to the class-I pyridoxal-phosphate-dependent aminotransferase family. In terms of assembly, homodimer. It depends on pyridoxal 5'-phosphate as a cofactor. As to expression, expressed in all tissues tested: liver, pancreas, kidney, heart, spleen, arterioles, and lymphocytes.

Its subcellular location is the mitochondrion matrix. It localises to the cell membrane. It carries out the reaction L-aspartate + 2-oxoglutarate = oxaloacetate + L-glutamate. The enzyme catalyses L-kynurenine + 2-oxoglutarate = kynurenate + L-glutamate + H2O. Functionally, catalyzes the irreversible transamination of the L-tryptophan metabolite L-kynurenine to form kynurenic acid (KA). As a member of the malate-aspartate shuttle, it has a key role in the intracellular NAD(H) redox balance. Is important for metabolite exchange between mitochondria and cytosol, and for amino acid metabolism. Facilitates cellular uptake of long-chain free fatty acids. This chain is Aspartate aminotransferase, mitochondrial (Got2), found in Rattus norvegicus (Rat).